An 89-amino-acid chain; its full sequence is Small ribosomal subunit protein uS15 (89 aa).

The protein belongs to the universal ribosomal protein uS15 family. As to quaternary structure, part of the 30S ribosomal subunit. Forms a bridge to the 50S subunit in the 70S ribosome, contacting the 23S rRNA.

Its function is as follows. One of the primary rRNA binding proteins, it binds directly to 16S rRNA where it helps nucleate assembly of the platform of the 30S subunit by binding and bridging several RNA helices of the 16S rRNA. In terms of biological role, forms an intersubunit bridge (bridge B4) with the 23S rRNA of the 50S subunit in the ribosome. The protein is Small ribosomal subunit protein uS15 of Limosilactobacillus reuteri (strain DSM 20016) (Lactobacillus reuteri).